The chain runs to 269 residues: MSKKRIIFVLLYCDGFFCLSRNFKLQRIGDFRWLQRNYNFNYSATFIDELIILDISRKSRDINKFATLLYNLSENIFVPITAGGGIRSFEDAKVLFENGADKVCLNTSLIQCPHVSEKISSVYGQQSLVASIDFKHDHGDFKFFIDNGLIEVQYNIQELISFLDPLPFCEILLQSVDRDGTGTGFDLTLANTFRDQLSKPIILLGGAGHSDHLVEGLLHQSTDAVATAHLLNFVGDGLKLSREQAQRHSEVSLARWPLLSSTSFSTTKH.

Aspartate 133 is a catalytic residue.

Belongs to the HisA/HisF family. Heterodimer of HisH and HisF.

Its subcellular location is the cytoplasm. It carries out the reaction 5-[(5-phospho-1-deoxy-D-ribulos-1-ylimino)methylamino]-1-(5-phospho-beta-D-ribosyl)imidazole-4-carboxamide + L-glutamine = D-erythro-1-(imidazol-4-yl)glycerol 3-phosphate + 5-amino-1-(5-phospho-beta-D-ribosyl)imidazole-4-carboxamide + L-glutamate + H(+). The protein operates within amino-acid biosynthesis; L-histidine biosynthesis; L-histidine from 5-phospho-alpha-D-ribose 1-diphosphate: step 5/9. In terms of biological role, IGPS catalyzes the conversion of PRFAR and glutamine to IGP, AICAR and glutamate. The HisF subunit catalyzes the cyclization activity that produces IGP and AICAR from PRFAR using the ammonia provided by the HisH subunit. The protein is Putative imidazole glycerol phosphate synthase subunit hisF2 (hisF2) of Parasynechococcus marenigrum (strain WH8102).